We begin with the raw amino-acid sequence, 78 residues long: Acyl carrier protein (78 aa).

One can recognise a Carrier domain in the interval 2 to 77 (STIEERVKKI…EAIDYVTAHA (76 aa)). At Ser-37 the chain carries O-(pantetheine 4'-phosphoryl)serine.

This sequence belongs to the acyl carrier protein (ACP) family. In terms of processing, 4'-phosphopantetheine is transferred from CoA to a specific serine of apo-ACP by AcpS. This modification is essential for activity because fatty acids are bound in thioester linkage to the sulfhydryl of the prosthetic group.

The protein resides in the cytoplasm. The protein operates within lipid metabolism; fatty acid biosynthesis. Its function is as follows. Carrier of the growing fatty acid chain in fatty acid biosynthesis. This Ectopseudomonas mendocina (strain ymp) (Pseudomonas mendocina) protein is Acyl carrier protein.